A 209-amino-acid polypeptide reads, in one-letter code: Probable glutathione peroxidase 8 (209 aa).

N-acetylmethionine is present on M1. A helical transmembrane segment spans residues 18 to 40 (IFAVLLSMVLCTVMLFLLQLKFL). C79 is an active-site residue.

Belongs to the glutathione peroxidase family.

It localises to the membrane. The catalysed reaction is 2 glutathione + H2O2 = glutathione disulfide + 2 H2O. The chain is Probable glutathione peroxidase 8 (Gpx8) from Mus musculus (Mouse).